The sequence spans 267 residues: MSGERRLNGLSLKVGPLGEHDRLLTLLSDQEGVTRLAVPGARRPRSSLAAAVPLSLLELQVAGRRGLARVRQLKVLRSFNSVGKQLETLAAAQALAELSLMLVAGNDPLPGLLNTLLMHLERLEALSQAQPAQPNTTLACSVQACVHLLALGGYGLPVQECCRNGTALEPPLGQWEWRCSLMPEEGFAIGALPGAALQLNPSELALLQRLLRPDLPMRRDGELMGPPEVWLRLLAVVECWTRTHLPHHMRALGMLRKAIISSGDGRT.

Belongs to the RecO family.

Involved in DNA repair and RecF pathway recombination. This is DNA repair protein RecO from Prochlorococcus marinus (strain MIT 9313).